Here is a 187-residue protein sequence, read N- to C-terminus: Ribosome-recycling factor (187 aa).

This sequence belongs to the RRF family.

The protein localises to the cytoplasm. Its function is as follows. Responsible for the release of ribosomes from messenger RNA at the termination of protein biosynthesis. May increase the efficiency of translation by recycling ribosomes from one round of translation to another. The protein is Ribosome-recycling factor of Orientia tsutsugamushi (strain Boryong) (Rickettsia tsutsugamushi).